Here is a 247-residue protein sequence, read N- to C-terminus: MNIIPCSIKTLKGLYDISGVEVGQHFYWQIGGFQIHAQVLITSWVVITILLGSVLIAVRNPQTIPTDGQNFFEYILEFIRDLSKTQIGEEYGPWVPFIGTMFLFIFVSNWSGALLPWKIIELPHGELAAPTNDINTTVALALLTSAAYFYAGLSKKGLSYFEKYIKPTPILLPINILEDFTKPLSLSFRLFGNILADELVVVVLVSLVPLVVPIPVMFLGLFTSGIQALIFATLAAAYIGESMEGHH.

Transmembrane regions (helical) follow at residues 38–58 (QVLI…LIAV), 95–115 (VPFI…GALL), 134–154 (INTT…AGLS), 199–219 (LVVV…VMFL), and 220–240 (GLFT…AYIG).

It belongs to the ATPase A chain family. In terms of assembly, F-type ATPases have 2 components, CF(1) - the catalytic core - and CF(0) - the membrane proton channel. CF(1) has five subunits: alpha(3), beta(3), gamma(1), delta(1), epsilon(1). CF(0) has four main subunits: a, b, b' and c.

It is found in the plastid. Its subcellular location is the chloroplast thylakoid membrane. Key component of the proton channel; it plays a direct role in the translocation of protons across the membrane. The polypeptide is ATP synthase subunit a, chloroplastic (Brachypodium distachyon (Purple false brome)).